Here is a 334-residue protein sequence, read N- to C-terminus: Ornithine carbamoyltransferase (334 aa).

Residues 57 to 60 (STRT), Q84, R108, and 135 to 138 (HPTQ) contribute to the carbamoyl phosphate site. Residues N169, D233, and 237 to 238 (SM) each bind L-ornithine. Residues 275–276 (CL) and R320 contribute to the carbamoyl phosphate site.

It belongs to the aspartate/ornithine carbamoyltransferase superfamily. OTCase family.

It localises to the cytoplasm. It carries out the reaction carbamoyl phosphate + L-ornithine = L-citrulline + phosphate + H(+). Its pathway is amino-acid biosynthesis; L-arginine biosynthesis; L-arginine from L-ornithine and carbamoyl phosphate: step 1/3. Its function is as follows. Reversibly catalyzes the transfer of the carbamoyl group from carbamoyl phosphate (CP) to the N(epsilon) atom of ornithine (ORN) to produce L-citrulline. The chain is Ornithine carbamoyltransferase from Vibrio campbellii (strain ATCC BAA-1116).